Here is a 189-residue protein sequence, read N- to C-terminus: Elongation factor P (189 aa).

At Lys-34 the chain carries N6-(3,6-diaminohexanoyl)-5-hydroxylysine.

The protein belongs to the elongation factor P family. In terms of processing, may be beta-lysylated on the epsilon-amino group of Lys-34 by the combined action of EpmA and EpmB, and then hydroxylated on the C5 position of the same residue by EpmC (if this protein is present). Lysylation is critical for the stimulatory effect of EF-P on peptide-bond formation. The lysylation moiety may extend toward the peptidyltransferase center and stabilize the terminal 3-CCA end of the tRNA. Hydroxylation of the C5 position on Lys-34 may allow additional potential stabilizing hydrogen-bond interactions with the P-tRNA.

It localises to the cytoplasm. Its pathway is protein biosynthesis; polypeptide chain elongation. Its function is as follows. Involved in peptide bond synthesis. Alleviates ribosome stalling that occurs when 3 or more consecutive Pro residues or the sequence PPG is present in a protein, possibly by augmenting the peptidyl transferase activity of the ribosome. Modification of Lys-34 is required for alleviation. This chain is Elongation factor P, found in Legionella pneumophila (strain Paris).